The primary structure comprises 59 residues: Single-pass membrane and coiled-coil domain-containing protein 4 (59 aa).

The disordered stretch occupies residues 1–27 (MRQLKGKPKKETSRDKKERKQAMQEAR). Residues 9–27 (KKETSRDKKERKQAMQEAR) are compositionally biased toward basic and acidic residues. Residues 9–31 (KKETSRDKKERKQAMQEARRQIT) are a coiled coil. Residues 32 to 52 (TVVLPTLAVVVLLIVVFVYVA) traverse the membrane as a helical segment.

This sequence belongs to the SMCO4 family.

The protein localises to the membrane. The polypeptide is Single-pass membrane and coiled-coil domain-containing protein 4 (SMCO4) (Bos taurus (Bovine)).